The following is a 563-amino-acid chain: Arginine--tRNA ligase (563 aa).

The 'HIGH' region signature appears at 121–131 (PNIAKPFSIGH).

It belongs to the class-I aminoacyl-tRNA synthetase family. As to quaternary structure, monomer.

The protein localises to the cytoplasm. It catalyses the reaction tRNA(Arg) + L-arginine + ATP = L-arginyl-tRNA(Arg) + AMP + diphosphate. The chain is Arginine--tRNA ligase from Streptococcus pyogenes serotype M49 (strain NZ131).